The primary structure comprises 682 residues: MPSLRTRREEAEMELSVPGPSPWTPAAQARVRDAPAVTHPGSAACGTPCCSDTELEAICPHYQQPDCDTRTEDKEFLHKEDIHEDLESQAEISENYAGDVSQVPELGDLCDDVSERDWGVPEGRRLPQSLSQEGDFTPAAMGLLRGPLGEKDLDCNGFDSRFSLSPNLMACQEIPTEERPHPYDMGGQSFQHSVDLTGHEGVPTAESPLICNECGKTFQGNPDLIQRQIVHTGEASFMCDDCGKTFSQNSVLKNRHRSHMSEKAYQCSECGKAFRGHSDFSRHQSHHSSERPYMCNECGKAFSQNSSLKKHQKSHMSEKPYECNECGKAFRRSSNLIQHQRIHSGEKPYVCSECGKAFRRSSNLIKHHRTHTGEKPFECGECGKAFSQSAHLRKHQRVHTGEKPYECNDCGKPFSRVSNLIKHHRVHTGEKPYKCSDCGKAFSQSSSLIQHRRIHTGEKPHVCNVCGKAFSYSSVLRKHQIIHTGEKPYRCSVCGKAFSHSSALIQHQGVHTGDKPYACHECGKTFGRSSNLILHQRVHTGEKPYECTECGKTFSQSSTLIQHQRIHNGLKPHECNQCGKAFNRSSNLIHHQKVHTGEKPYTCVECGKGFSQSSHLIQHQIIHTGERPYKCSECGKAFSQRSVLIQHQRIHTGVKPYDCAACGKAFSQRSKLIKHQLIHTRE.

Basic and acidic residues predominate over residues 1-10 (MPSLRTRREE). Positions 1 to 43 (MPSLRTRREEAEMELSVPGPSPWTPAAQARVRDAPAVTHPGSA) are disordered. The tract at residues 62–210 (YQQPDCDTRT…GVPTAESPLI (149 aa)) is necessary for transcription activation. A C2H2-type 1; degenerate zinc finger spans residues 209–231 (LICNECGKTFQGNPDLIQRQIVH). Residues 237–259 (FMCDDCGKTFSQNSVLKNRHRSH) form a C2H2-type 2; degenerate zinc finger. Lys-253 is covalently cross-linked (Glycyl lysine isopeptide (Lys-Gly) (interchain with G-Cter in SUMO2)). C2H2-type zinc fingers lie at residues 265–287 (YQCSECGKAFRGHSDFSRHQSHH), 293–315 (YMCNECGKAFSQNSSLKKHQKSH), 321–343 (YECNECGKAFRRSSNLIQHQRIH), 349–371 (YVCSECGKAFRRSSNLIKHHRTH), 377–399 (FECGECGKAFSQSAHLRKHQRVH), 405–427 (YECNDCGKPFSRVSNLIKHHRVH), 433–455 (YKCSDCGKAFSQSSSLIQHRRIH), and 461–483 (HVCNVCGKAFSYSSVLRKHQIIH). Required for nuclear localization stretches follow at residues 268-393 (SECG…AHLR) and 341-373 (RIHSGEKPYVCSECGKAFRRSSNLIKHHRTHTG). The interval 473-503 (SSVLRKHQIIHTGEKPYRCSVCGKAFSHSSA) is required for nuclear localization. Position 487 is an N6-acetyllysine (Lys-487). C2H2-type zinc fingers lie at residues 489–511 (YRCSVCGKAFSHSSALIQHQGVH), 517–539 (YACHECGKTFGRSSNLILHQRVH), 545–567 (YECTECGKTFSQSSTLIQHQRIH), 573–595 (HECNQCGKAFNRSSNLIHHQKVH), 601–623 (YTCVECGKGFSQSSHLIQHQIIH), 629–651 (YKCSECGKAFSQRSVLIQHQRIH), and 657–679 (YDCAACGKAFSQRSKLIKHQLIH).

This sequence belongs to the krueppel C2H2-type zinc-finger protein family. As to quaternary structure, interacts with INCA1; the interaction inhibits INCA1 activity and induces the cell cycle process. In terms of tissue distribution, ubiquitous.

It localises to the nucleus. Acts as a transcriptional activator. Promotes cell proliferation by facilitating the cell cycle phase transition from the S to G2/M phase. Involved in both the hemin- and phorbol myristate acetate (PMA)-induced erythroid and megakaryocytic differentiation, respectively. Also plays a role as an inhibitor of cell apoptosis. This is Zinc finger protein 16 (ZNF16) from Homo sapiens (Human).